The following is a 264-amino-acid chain: Proliferating cell nuclear antigen 2 (264 aa).

It belongs to the PCNA family. As to quaternary structure, homotrimer. Oligomer. Interacts with ORC1 (via PIP-box motif). Interacts with FEN1.

The protein localises to the nucleus. It localises to the chromosome. The protein resides in the cytoplasm. May be involved in DNA damage response. Appears not to be involved in DNA replication in trophozoites. This is Proliferating cell nuclear antigen 2 from Plasmodium falciparum (isolate 3D7).